We begin with the raw amino-acid sequence, 236 residues long: Translocon-associated protein subunit alpha (236 aa).

Residues 1-20 form the signal peptide; it reads MNKLITLLLAVLMIISCVYS. Over 21–163 the chain is Lumenal; sequence DDVEITDDEV…TEKETSFDMD (143 aa). 5 N-linked (GlcNAc...) asparagine glycosylation sites follow: Asn74, Asn94, Asn141, Asn148, and Asn152. A helical transmembrane segment spans residues 164–184; that stretch reads SFFLILLGLGFVGGIGYIVYG. The Cytoplasmic portion of the chain corresponds to 185–236; that stretch reads KMPKQKKVRTVSKVNKNAVRVETEDETAEWLSGTSAASSKVKSVQKVVKKNK.

The protein belongs to the TRAP-alpha family. As to quaternary structure, heterotrimer of TRAP-alpha, TRAP-beta and TRAP-gamma. Post-translationally, phosphorylated in its cytoplasmic tail.

The protein localises to the endoplasmic reticulum membrane. In terms of biological role, TRAP proteins are part of a complex whose function is to bind calcium to the ER membrane and thereby regulate the retention of ER resident proteins. The protein is Translocon-associated protein subunit alpha (ssr1) of Dictyostelium discoideum (Social amoeba).